The chain runs to 339 residues: MFYKIAQSIMFQMDPERAHNLAIGSLKRTANTPMTAFYAQCIAPKPVTCMGIIFPNPVGLAAGLDKDGEAIDAFHAMGFGHVEVGTVTPRPQPGNDLPRLFRLKPAKGIINRMGFNNKGVDNLVANLKAKKTDILVGVNIGKNKDTPVEEGKNDYLICMDKVYPHAAYIAVNISSPNTPGLRTLQYGDLLDDLLSSLKAKQTELAEQHGKYVPIALKIAPDLTDEEIASIATSLIKNQFDAAIATNTTLSRDGVSGLANANETGGLSGKPLTELSTKVIKKLAAELKGEIPIIGVGGINSSQDALAKFDAGATLVQIYSGFIYQGPKLIKDIVASYSAK.

FMN-binding positions include 62-66 (AGLDK) and threonine 86. Lysine 66 provides a ligand contact to substrate. 111–115 (NRMGF) is a binding site for substrate. Residues asparagine 139 and asparagine 172 each contribute to the FMN site. Asparagine 172 serves as a coordination point for substrate. Serine 175 acts as the Nucleophile in catalysis. A substrate-binding site is contributed by asparagine 177. Residues lysine 217 and threonine 245 each coordinate FMN. 246–247 (NT) provides a ligand contact to substrate. Residues glycine 268, glycine 297, and 318 to 319 (YS) each bind FMN.

This sequence belongs to the dihydroorotate dehydrogenase family. Type 2 subfamily. In terms of assembly, monomer. FMN serves as cofactor.

The protein localises to the cell membrane. The catalysed reaction is (S)-dihydroorotate + a quinone = orotate + a quinol. It participates in pyrimidine metabolism; UMP biosynthesis via de novo pathway; orotate from (S)-dihydroorotate (quinone route): step 1/1. In terms of biological role, catalyzes the conversion of dihydroorotate to orotate with quinone as electron acceptor. This is Dihydroorotate dehydrogenase (quinone) from Shewanella amazonensis (strain ATCC BAA-1098 / SB2B).